We begin with the raw amino-acid sequence, 137 residues long: NADH dehydrogenase [ubiquinone] 1 beta subcomplex subunit 7 (137 aa).

The N-myristoyl glycine moiety is linked to residue glycine 2. A CHCH domain is found at arginine 56–arginine 98. Residues cysteine 59 to cysteine 69 carry the Cx9C motif 1 motif. Disulfide bonds link cysteine 59/cysteine 90 and cysteine 69/cysteine 80. Serine 73 carries the phosphoserine modification. The Cx9C motif 2 motif lies at cysteine 80–cysteine 90. The disordered stretch occupies residues glutamine 110–leucine 137.

Belongs to the complex I NDUFB7 subunit family. As to quaternary structure, complex I is composed of 45 different subunits.

Its subcellular location is the mitochondrion inner membrane. The protein localises to the mitochondrion intermembrane space. Accessory subunit of the mitochondrial membrane respiratory chain NADH dehydrogenase (Complex I), that is believed not to be involved in catalysis. Complex I functions in the transfer of electrons from NADH to the respiratory chain. The immediate electron acceptor for the enzyme is believed to be ubiquinone. The protein is NADH dehydrogenase [ubiquinone] 1 beta subcomplex subunit 7 (NDUFB7) of Bos taurus (Bovine).